A 229-amino-acid polypeptide reads, in one-letter code: Glycine betaine/carnitine/choline transport system permease protein OpuCD (229 aa).

Residues 22–202 (FYRHFLMSVY…LMAVIADLVM (181 aa)) enclose the ABC transmembrane type-1 domain. Helical transmembrane passes span 27 to 47 (LMSV…GILI), 55 to 74 (GWVF…AMLA), 78 to 100 (LVMG…LPII), 148 to 168 (ALVI…GGLG), and 182 to 202 (AIIL…DLVM).

It belongs to the binding-protein-dependent transport system permease family. CysTW subfamily. As to quaternary structure, the complex is composed of two ATP-binding proteins (OpuCA), two transmembrane proteins (OpuCB and OpuCD) and a solute-binding protein (OpuCC).

It is found in the cell membrane. In terms of biological role, involved in a high affinity multicomponent binding-protein-dependent transport system for glycine betaine, carnitine and choline; probably responsible for the translocation of the substrate across the membrane. The chain is Glycine betaine/carnitine/choline transport system permease protein OpuCD (opuCD) from Bacillus subtilis (strain 168).